We begin with the raw amino-acid sequence, 271 residues long: Zinc finger protein 501 (271 aa).

9 consecutive C2H2-type zinc fingers follow at residues 22–44 (SKCSECGRFFTQRSSLTQHQRIH), 50–72 (YVCSECGSCFRKQSNLTQHLRIH), 78–100 (YKCNECEKAFQTKAILVQHLRIH), 106–128 (YKCNECGKAFCQSPSLIKHQRIH), 134–156 (YKCAECGKAFSQSVCLTRHQRSH), 162–184 (FKCNECGKAFNQSACLMQHQRIH), 190–212 (YTCTECGKAFTQNSSLVEHERTH), 218–240 (YKCSECEKTFRKQAHLSEHYRIH), and 246–268 (YECFGCGKSFRHSSALLRHQRLH).

This sequence belongs to the krueppel C2H2-type zinc-finger protein family.

Its subcellular location is the nucleus. The protein resides in the nucleolus. May be involved in transcriptional regulation. Essential for Golgi structural integrity. The chain is Zinc finger protein 501 (ZNF501) from Pongo abelii (Sumatran orangutan).